We begin with the raw amino-acid sequence, 196 residues long: Elongation factor Ts (196 aa).

Residues 80–83 (TDFV) form an involved in Mg(2+) ion dislocation from EF-Tu region.

Belongs to the EF-Ts family.

The protein resides in the cytoplasm. Functionally, associates with the EF-Tu.GDP complex and induces the exchange of GDP to GTP. It remains bound to the aminoacyl-tRNA.EF-Tu.GTP complex up to the GTP hydrolysis stage on the ribosome. In Desulfotalea psychrophila (strain LSv54 / DSM 12343), this protein is Elongation factor Ts.